A 99-amino-acid polypeptide reads, in one-letter code: Bombyxin A-1 homolog (99 aa).

Positions 1–19 (MKTQVLFLVFALAAVMVSG) are cleaved as a signal peptide. 3 disulfides stabilise this stretch: cysteine 27/cysteine 86, cysteine 39/cysteine 99, and cysteine 85/cysteine 90. A propeptide spans 48 to 76 (TPYISPENEGYGWRWLEPQRARQLDGARG) (c peptide like).

The protein belongs to the insulin family. Heterodimer of a B chain and an A chain linked by two disulfide bonds.

Its subcellular location is the secreted. Brain peptide responsible for activation of prothoracic glands to produce ecdysone in insects. The polypeptide is Bombyxin A-1 homolog (SBXA1) (Samia cynthia (Ailanthus silkmoth)).